We begin with the raw amino-acid sequence, 477 residues long: Aspartyl/glutamyl-tRNA(Asn/Gln) amidotransferase subunit B (477 aa).

Belongs to the GatB/GatE family. GatB subfamily. In terms of assembly, heterotrimer of A, B and C subunits.

The enzyme catalyses L-glutamyl-tRNA(Gln) + L-glutamine + ATP + H2O = L-glutaminyl-tRNA(Gln) + L-glutamate + ADP + phosphate + H(+). The catalysed reaction is L-aspartyl-tRNA(Asn) + L-glutamine + ATP + H2O = L-asparaginyl-tRNA(Asn) + L-glutamate + ADP + phosphate + 2 H(+). Its function is as follows. Allows the formation of correctly charged Asn-tRNA(Asn) or Gln-tRNA(Gln) through the transamidation of misacylated Asp-tRNA(Asn) or Glu-tRNA(Gln) in organisms which lack either or both of asparaginyl-tRNA or glutaminyl-tRNA synthetases. The reaction takes place in the presence of glutamine and ATP through an activated phospho-Asp-tRNA(Asn) or phospho-Glu-tRNA(Gln). The chain is Aspartyl/glutamyl-tRNA(Asn/Gln) amidotransferase subunit B from Lawsonia intracellularis (strain PHE/MN1-00).